Consider the following 331-residue polypeptide: Meiotic recombination protein P22 (331 aa).

The segment at 132–187 (NNIQKEVHQRNSQRRSIQCTPKKRGRKPKQPAKKLQSRISTDQLGSTPSPSKLPAK) is disordered. Residues 152-167 (PKKRGRKPKQPAKKLQ) show a composition bias toward basic residues. Over residues 168-181 (SRISTDQLGSTPSP) the composition is skewed to polar residues.

Belongs to the TOP6B-like family.

It is found in the chromosome. Required for formation of the mei-W68-mediated double-strand breaks (DSBs) that initiate meiotic recombination. This chain is Meiotic recombination protein P22, found in Drosophila melanogaster (Fruit fly).